Here is a 459-residue protein sequence, read N- to C-terminus: WPP domain-interacting protein 3 (459 aa).

Residues 1–17 are compositionally biased toward polar residues; the sequence is MNESVPDSVEDNGNSVP. Residues 1–78 form a disordered region; sequence MNESVPDSVE…GPVRDEAAPV (78 aa). Residues 52-66 show a composition bias toward basic residues; sequence STRKGFGLKKWRRIK. 2 short sequence motifs (nuclear localization signal) span residues 60–61 and 63–64; these read KK and RR. The segment covering 67–78 has biased composition (basic and acidic residues); that stretch reads RDGPVRDEAAPV. Residues 86–87 carry the Nuclear localization signal 3 motif; it reads KR. Disordered regions lie at residues 240–266 and 308–330; these read KEEVQTYSRSENGNKEDDGESKKNNNH and TDELSSDQPSHQNCKEDNSTSSG. Residues 251-266 show a composition bias toward basic and acidic residues; sequence NGNKEDDGESKKNNNH. The span at 308 to 319 shows a compositional bias: polar residues; sequence TDELSSDQPSHQ. A coiled-coil region spans residues 331–375; it reads SKALILKEKVKLLEHKLEEARAALEAKEARIQELENSKIESELEC. Positions 426–459 constitute a KASH domain; sequence KLGFYILTQLILLVSILRFLVLQFSPASRLVIPT. Residues 427–447 traverse the membrane as a helical segment; the sequence is LGFYILTQLILLVSILRFLVL.

As to quaternary structure, component of Ran complexes at least composed of WIT1 or WIT2, RANGAP1 or RANGAP2, and WIP1 or WIP2 or WIP3. Interacts with RANGAP1, WPP1/MAF1, and WPP2/MAF2. Interacts with SUN1 and SUN2. Core component of the LINC complex which is composed of inner nuclear membrane SUN domain-containing proteins coupled to outer nuclear membrane WIP and WIT proteins. The LINC complex also involves nucleoskeletal proteins CRWN/LINC and possibly KAKU4 and the cytoskeletal myosin KAKU1. Interacts with WIT2. As to expression, expressed in seedlings, roots, stems, leaves, and flowers.

It is found in the nucleus envelope. The protein localises to the nucleus membrane. Functionally, mediates and enhances the nuclear envelope docking of RANGAP proteins mediated by WIT1 and WIT2 in the undifferentiated cells of root tips. As component of the SUN-WIP-WIT2-KAKU1 complex, mediates the transfer of cytoplasmic forces to the nuclear envelope (NE), leading to nuclear shape changes. The chain is WPP domain-interacting protein 3 (WIP3) from Arabidopsis thaliana (Mouse-ear cress).